We begin with the raw amino-acid sequence, 655 residues long: Protein-glucosylgalactosylhydroxylysine glucosidase (655 aa).

258–259 (WD) serves as a coordination point for substrate. E388 functions as the Proton donor in the catalytic mechanism. 456 to 457 (KQ) lines the substrate pocket.

It belongs to the glycosyl hydrolase 65 family.

It carries out the reaction (5R)-5-O-[alpha-D-glucosyl-(1-&gt;2)-beta-D-galactosyl]-5-hydroxy-L-lysyl-[collagen] + H2O = (5R)-5-O-(beta-D-galactosyl)-5-hydroxy-L-lysyl-[collagen] + D-glucose. Functionally, catalyzes the hydrolysis of glucose from the disaccharide unit linked to hydroxylysine residues of collagen and collagen-like proteins. The sequence is that of Protein-glucosylgalactosylhydroxylysine glucosidase from Danio rerio (Zebrafish).